The primary structure comprises 621 residues: DnaJ homolog subfamily C member 2 (621 aa).

Residue M1 is modified to N-acetylmethionine. 4 positions are modified to phosphoserine: S47, S49, S60, and S63. The J domain occupies 88-161; that stretch reads DHYAVLGLGH…VKRRAFNSVD (74 aa). A ZRF1-UBD region spans residues 160 to 250; it reads VDPTFDNSVP…RDERRWIEKQ (91 aa). S183 bears the Phosphoserine mark. Disordered stretches follow at residues 294–315 and 427–453; these read EKKA…QRQA and EEAE…GSKN. 2 consecutive SANT domains span residues 449-511 and 549-604; these read NGSK…KLDP and TDFT…EMVK.

Component of ribosome-associated complex (RAC), a heterodimer composed of Hsp70/DnaK-type chaperone HSPA14 and Hsp40/DnaJ-type chaperone DNAJC2. Interacts (via ZRF1-UBD region) with ID1. In terms of processing, phosphorylated in M (mitotic) phase.

The protein localises to the nucleus. Its subcellular location is the cytoplasm. The protein resides in the cytosol. In terms of biological role, acts both as a chaperone in the cytosol and as a chromatin regulator in the nucleus. When cytosolic, acts as a molecular chaperone: component of the ribosome-associated complex (RAC), a complex involved in folding or maintaining nascent polypeptides in a folding-competent state. In the RAC complex, stimulates the ATPase activity of the ribosome-associated pool of Hsp70-type chaperones HSPA14 that bind to the nascent polypeptide chain. When nuclear, mediates the switching from polycomb-repressed genes to an active state: specifically recruited at histone H2A ubiquitinated at 'Lys-119' (H2AK119ub), and promotes the displacement of the polycomb PRC1 complex from chromatin, thereby facilitating transcription activation. The protein is DnaJ homolog subfamily C member 2 (DNAJC2) of Macaca fascicularis (Crab-eating macaque).